The following is a 305-amino-acid chain: Ribonuclease BN (305 aa).

Positions 64, 66, 68, 69, 141, 212, and 270 each coordinate Zn(2+). Asp-68 acts as the Proton acceptor in catalysis.

Belongs to the RNase Z family. RNase BN subfamily. In terms of assembly, homodimer. Zn(2+) serves as cofactor.

Its function is as follows. Zinc phosphodiesterase, which has both exoribonuclease and endoribonuclease activities. This chain is Ribonuclease BN, found in Salmonella gallinarum (strain 287/91 / NCTC 13346).